The following is a 573-amino-acid chain: uncharacterized protein (573 aa).

Disordered regions lie at residues Met1–Arg33 and Leu60–Asp101. Polar residues predominate over residues Leu60–Asn70. Asn63 is a glycosylation site (N-linked (GlcNAc...) asparagine). Residues Ser84–Asn95 are compositionally biased toward low complexity. 10 repeat units span residues Asn102–Met103, Asn104–Met105, Asn106–Met107, Asn108–Met109, Asn110–Met111, Asn112–Met113, Asn114–Met115, Asn116–Met117, Asn118–Met119, and Asn120–Met121. Residues Asn102–Met121 form a 10 X 2 AA tandem repeats of N-M region. N-linked (GlcNAc...) asparagine glycosylation is present at Asn123. Disordered regions lie at residues Ile150 to Arg174, Gln192 to Asn271, Lys286 to Ser317, and Asn357 to Thr379. The segment covering Ser157–Asn170 has biased composition (polar residues). Residues Leu208 to Leu225 are compositionally biased toward low complexity. A compositionally biased stretch (polar residues) spans Thr226–Lys252. Asn236 carries N-linked (GlcNAc...) asparagine glycosylation. Asn437 and Asn442 each carry an N-linked (GlcNAc...) asparagine glycan. 2 stretches are compositionally biased toward low complexity: residues Ile441–Ser457 and Ser466–Lys483. The tract at residues Ile441–Lys483 is disordered. N-linked (GlcNAc...) asparagine glycosylation is found at Asn498, Asn535, and Asn541.

It to yeast AFR1. In terms of processing, N-glycosylated.

This is an uncharacterized protein from Saccharomyces cerevisiae (strain ATCC 204508 / S288c) (Baker's yeast).